Here is a 240-residue protein sequence, read N- to C-terminus: Uridylate kinase (240 aa).

An ATP-binding site is contributed by 13 to 16; the sequence is KFSG. Residue Gly55 coordinates UMP. Residues Gly56 and Arg60 each contribute to the ATP site. Residues Asp76 and 137–144 each bind UMP; that span reads TGNPFFTT. Residues Thr164, Tyr170, and Asp173 each coordinate ATP.

This sequence belongs to the UMP kinase family. As to quaternary structure, homohexamer.

The protein resides in the cytoplasm. The catalysed reaction is UMP + ATP = UDP + ADP. It functions in the pathway pyrimidine metabolism; CTP biosynthesis via de novo pathway; UDP from UMP (UMPK route): step 1/1. With respect to regulation, inhibited by UTP. Its function is as follows. Catalyzes the reversible phosphorylation of UMP to UDP. This Helicobacter pylori (strain J99 / ATCC 700824) (Campylobacter pylori J99) protein is Uridylate kinase.